A 115-amino-acid polypeptide reads, in one-letter code: Large ribosomal subunit protein uL22 (115 aa).

This sequence belongs to the universal ribosomal protein uL22 family. Part of the 50S ribosomal subunit.

Its function is as follows. This protein binds specifically to 23S rRNA; its binding is stimulated by other ribosomal proteins, e.g. L4, L17, and L20. It is important during the early stages of 50S assembly. It makes multiple contacts with different domains of the 23S rRNA in the assembled 50S subunit and ribosome. The globular domain of the protein is located near the polypeptide exit tunnel on the outside of the subunit, while an extended beta-hairpin is found that lines the wall of the exit tunnel in the center of the 70S ribosome. This is Large ribosomal subunit protein uL22 (rplV) from Wolbachia pipientis wMel.